Reading from the N-terminus, the 1118-residue chain is uncharacterized protein (1118 aa).

Disordered stretches follow at residues 1-69 (MESG…NGED), 1044-1071 (PKSVSSSSSLGRKRGRKRENSEEEEKID), and 1090-1118 (IRPTVNVEEDQNIKTEIEDSDDLEDSFEL). Positions 13 to 34 (DMVEEDNDEDSFEEPACEDSFD) are enriched in acidic residues. A compositionally biased stretch (polar residues) spans 35–60 (SQEASSKANEPQNDSFDEPIQSSVSK). The span at 1107-1118 (EDSDDLEDSFEL) shows a compositional bias: acidic residues.

This is an uncharacterized protein from Caenorhabditis elegans.